Consider the following 295-residue polypeptide: Tyrosine recombinase XerD (295 aa).

The Core-binding (CB) domain maps to Met-1–Leu-85. The 184-residue stretch at Lys-106 to Thr-289 folds into the Tyr recombinase domain. Active-site residues include Arg-146, Lys-170, His-241, Arg-244, and His-267. The O-(3'-phospho-DNA)-tyrosine intermediate role is filled by Tyr-276.

The protein belongs to the 'phage' integrase family. XerD subfamily. As to quaternary structure, forms a cyclic heterotetrameric complex composed of two molecules of XerC and two molecules of XerD.

Its subcellular location is the cytoplasm. In terms of biological role, site-specific tyrosine recombinase, which acts by catalyzing the cutting and rejoining of the recombining DNA molecules. The XerC-XerD complex is essential to convert dimers of the bacterial chromosome into monomers to permit their segregation at cell division. It also contributes to the segregational stability of plasmids. The polypeptide is Tyrosine recombinase XerD (Staphylococcus epidermidis (strain ATCC 35984 / DSM 28319 / BCRC 17069 / CCUG 31568 / BM 3577 / RP62A)).